Here is a 189-residue protein sequence, read N- to C-terminus: GTP cyclohydrolase 1 (189 aa).

Positions 79, 82, and 150 each coordinate Zn(2+).

The protein belongs to the GTP cyclohydrolase I family. In terms of assembly, homomer.

The enzyme catalyses GTP + H2O = 7,8-dihydroneopterin 3'-triphosphate + formate + H(+). The protein operates within cofactor biosynthesis; 7,8-dihydroneopterin triphosphate biosynthesis; 7,8-dihydroneopterin triphosphate from GTP: step 1/1. The polypeptide is GTP cyclohydrolase 1 (Rickettsia rickettsii (strain Iowa)).